Reading from the N-terminus, the 502-residue chain is Zinc finger protein 488 (502 aa).

The region spanning 8–130 is the SET domain; it reads RSLWTNDSKI…EGEELLVWYD (123 aa). Y129 lines the S-adenosyl-L-methionine pocket. Residues 151–174 form a C2H2-type 1; atypical zinc finger; sequence YTCTRCGQAFKNENPFLAHCRFLC. 2 disordered regions span residues 267 to 303 and 338 to 361; these read SEPT…KSSR and PSKR…LDSF. The segment covering 269–286 has biased composition (polar residues); the sequence is PTDNAQTNESKISKNSAF. C2H2-type zinc fingers lie at residues 438-460 and 479-501; these read NWCA…MRSH and LTCP…MTSH.

This sequence belongs to the krueppel C2H2-type zinc-finger protein family. Expressed in pMN progenitors and oligodendrocyte lineage cells in the embryo with expression declining in oligodendrocytes undergoing differentiation.

It is found in the nucleus. Transcriptional repressor. May have histone methyltransferase activity. Negatively regulates shh signaling activity in pMN progenitor cells which prevents their switch from motor neuron to oligodendrocyte precursor cell production. Independently of shh activity, also regulates oligodendrocyte formation. The protein is Zinc finger protein 488 of Danio rerio (Zebrafish).